Reading from the N-terminus, the 274-residue chain is Cytochrome b-c1 complex subunit Rieske, mitochondrial (274 aa).

Topologically, residues 79 to 103 (SHTDIKVPDFSDYRRSEVLDTTKSS) are mitochondrial matrix. A helical membrane pass occupies residues 104-140 (RESSDARKGFSYLVTATTAVGVTYAAKSIVTQFVSSM). The Mitochondrial intermembrane segment spans residues 141 to 274 (SASADVLAMS…FTSDDLVIVG (134 aa)). The Rieske domain maps to 187-272 (EAAVELSQLR…YEFTSDDLVI (86 aa)). Cys217, His219, Cys236, His239, and Ser241 together coordinate [2Fe-2S] cluster. Cys222 and Cys238 are joined by a disulfide.

It belongs to the Rieske iron-sulfur protein family. As to quaternary structure, component of the ubiquinol-cytochrome c oxidoreductase (cytochrome b-c1 complex, complex III, CIII), a multisubunit enzyme composed of 11 subunits. The complex is composed of 3 respiratory subunits cytochrome b, cytochrome c1 and Rieske protein UQCRFS1, 2 core protein subunits UQCRC1/QCR1 and UQCRC2/QCR2, and 6 low-molecular weight protein subunits UQCRH/QCR6, UQCRB/QCR7, UQCRQ/QCR8, UQCR10/QCR9, UQCR11/QCR10 and subunit 9, the cleavage product of Rieske protein UQCRFS1. The complex exists as an obligatory dimer and forms supercomplexes (SCs) in the inner mitochondrial membrane with NADH-ubiquinone oxidoreductase (complex I, CI) and cytochrome c oxidase (complex IV, CIV), resulting in different assemblies (supercomplex SCI(1)III(2)IV(1) and megacomplex MCI(2)III(2)IV(2)). Incorporation of the Rieske protein UQCRFS1 is the penultimate step in complex III assembly. Interacts with TTC19, which is involved in the clearance of UQCRFS1 fragments. Component of the ubiquinol-cytochrome c oxidoreductase (cytochrome b-c1 complex, complex III, CIII). Subunit 9 corresponds to the mitochondrial targeting sequence (MTS) of Rieske protein UQCRFS1. It is retained after processing and incorporated inside complex III, where it remains bound to the complex and localizes between the 2 core subunits UQCRC1/QCR1 and UQCRC2/QCR2. It depends on [2Fe-2S] cluster as a cofactor. Post-translationally, proteolytic processing is necessary for the correct insertion of UQCRFS1 in the complex III dimer. Several fragments are generated during UQCRFS1 insertion, most probably due to the endogenous matrix-processing peptidase (MPP) activity of the 2 core protein subunits UQCRC1/QCR1 and UQCRC2/QCR2, which are homologous to the 2 mitochondrial-processing peptidase (MPP) subunits beta-MPP and alpha-MPP respectively. The action of the protease is also necessary for the clearance of the UQCRFS1 fragments.

It localises to the mitochondrion inner membrane. The catalysed reaction is a quinol + 2 Fe(III)-[cytochrome c](out) = a quinone + 2 Fe(II)-[cytochrome c](out) + 2 H(+)(out). Component of the ubiquinol-cytochrome c oxidoreductase, a multisubunit transmembrane complex that is part of the mitochondrial electron transport chain which drives oxidative phosphorylation. The respiratory chain contains 3 multisubunit complexes succinate dehydrogenase (complex II, CII), ubiquinol-cytochrome c oxidoreductase (cytochrome b-c1 complex, complex III, CIII) and cytochrome c oxidase (complex IV, CIV), that cooperate to transfer electrons derived from NADH and succinate to molecular oxygen, creating an electrochemical gradient over the inner membrane that drives transmembrane transport and the ATP synthase. The cytochrome b-c1 complex catalyzes electron transfer from ubiquinol to cytochrome c, linking this redox reaction to translocation of protons across the mitochondrial inner membrane, with protons being carried across the membrane as hydrogens on the quinol. In the process called Q cycle, 2 protons are consumed from the matrix, 4 protons are released into the intermembrane space and 2 electrons are passed to cytochrome c. The Rieske protein is a catalytic core subunit containing a [2Fe-2S] iron-sulfur cluster. It cycles between 2 conformational states during catalysis to transfer electrons from the quinol bound in the Q(0) site in cytochrome b to cytochrome c1. Incorporation of UQCRFS1 is the penultimate step in complex III assembly. Its function is as follows. Component of the ubiquinol-cytochrome c oxidoreductase (cytochrome b-c1 complex, complex III, CIII). UQCRFS1 undergoes proteolytic processing once it is incorporated in the complex III dimer. One of the fragments, called subunit 9, corresponds to its mitochondrial targeting sequence (MTS). The proteolytic processing is necessary for the correct insertion of UQCRFS1 in the complex III dimer, but the persistence of UQCRFS1-derived fragments may prevent newly imported UQCRFS1 to be processed and assembled into complex III and is detrimental for the complex III structure and function. The chain is Cytochrome b-c1 complex subunit Rieske, mitochondrial (UQCRFS1) from Aotus azarae (Azara's night monkey).